A 186-amino-acid chain; its full sequence is Ribosome-recycling factor (186 aa).

It belongs to the RRF family.

The protein resides in the cytoplasm. Functionally, responsible for the release of ribosomes from messenger RNA at the termination of protein biosynthesis. May increase the efficiency of translation by recycling ribosomes from one round of translation to another. The chain is Ribosome-recycling factor from Rickettsia africae (strain ESF-5).